Consider the following 437-residue polypeptide: 26S proteasome regulatory subunit 4 homolog (437 aa).

A disordered region spans residues 1 to 47 (MGQGVSSGQDKKKKKGSNQKPKYEPPVQSKFGRKKRKGGPATAEKLP). Glycine 2 is lipidated: N-myristoyl glycine. Residue 223–230 (GAPGTGKT) participates in ATP binding. Residues lysine 234, lysine 255, and lysine 290 each participate in a glycyl lysine isopeptide (Lys-Gly) (interchain with G-Cter in ubiquitin) cross-link.

The protein belongs to the AAA ATPase family.

It is found in the cytoplasm. It localises to the nucleus. Its function is as follows. The 26S proteasome is involved in the ATP-dependent degradation of ubiquitinated proteins. The regulatory (or ATPase) complex confers ATP dependency and substrate specificity to the 26S complex. Has ATPase activity. This is 26S proteasome regulatory subunit 4 homolog (RPT2) from Saccharomyces cerevisiae (strain ATCC 204508 / S288c) (Baker's yeast).